Here is a 226-residue protein sequence, read N- to C-terminus: SPI-1 type 3 secretion system stator protein (226 aa).

The core secretion machinery of the T3SS is composed of approximately 20 different proteins, including cytoplasmic components, a base, an export apparatus and a needle. This subunit is part of the cytosolic complex. Interacts directly with InvC/SctN1 (T3SS-1 ATPase) and SpaO/SctQ (the major sorting platform component).

It is found in the cytoplasm. Component of the type III secretion system (T3SS), also called injectisome, which is used to inject bacterial effector proteins into eukaryotic host cells. Acts as a regulator of the InvC/SctN1 ATPase activity. Required for invasion and secretion. The protein is SPI-1 type 3 secretion system stator protein of Salmonella typhimurium (strain SL1344).